Reading from the N-terminus, the 706-residue chain is Transcription factor 12 (706 aa).

Residues 25–109 (AMFSPPVNSG…TPFMNSNLIG (85 aa)) form a disordered region. Polar residues-rich tracts occupy residues 30 to 48 (PVNSGKTRPTTLGSSQFSG) and 56 to 76 (GTTSWGTSGQPSPSYDSSRGF). Residues Ser-47, Ser-67, and Ser-79 each carry the phosphoserine modification. Positions 81-93 (HYSDHLNDSRLGT) are enriched in basic and acidic residues. Ser-98 is subject to Phosphoserine. Lys-110 participates in a covalent cross-link: Glycyl lysine isopeptide (Lys-Gly) (interchain with G-Cter in SUMO2). Phosphoserine occurs at positions 116 and 124. The tract at residues 119 to 140 (LYSRDSGLSGCQSSLLRQDLGL) is leucine-zipper. 2 disordered regions span residues 140–222 (LGSP…SMFA) and 249–313 (FGGI…ASHT). The segment covering 144 to 163 (AQLSSSGKPGTPYYSFSATS) has biased composition (polar residues). Lys-181 participates in a covalent cross-link: Glycyl lysine isopeptide (Lys-Gly) (interchain with G-Cter in SUMO2). The Nuclear localization signal motif lies at 181 to 188 (KKVRKVPP). The span at 256 to 269 (STSHMSQSSSYGSL) shows a compositional bias: low complexity. Residues 282–306 (VSPTDINTSLPPMSSFHRGSTSSSP) are compositionally biased toward polar residues. Thr-313 carries the post-translational modification Phosphothreonine. Ser-333 bears the Phosphoserine mark. Disordered stretches follow at residues 349 to 392 (PDHT…YENS) and 520 to 604 (HKTP…ERRM). The span at 352–363 (TSSSFPSNPSTP) shows a compositional bias: low complexity. 2 stretches are compositionally biased toward polar residues: residues 364 to 376 (VGSPSPLTGTSQW) and 383 to 392 (APSSPSYENS). A Phosphoserine modification is found at Ser-392. Composition is skewed to basic and acidic residues over residues 542–554 (IKTENKEKDENLH) and 560–575 (DDMKSDDESSQKDIKV). Lys-543 is covalently cross-linked (Glycyl lysine isopeptide (Lys-Gly) (interchain with G-Cter in SUMO2)). Position 564 is a phosphoserine (Ser-564). Residue Lys-574 forms a Glycyl lysine isopeptide (Lys-Gly) (interchain with G-Cter in SUMO2) linkage. Thr-581 carries the phosphothreonine modification. Phosphoserine occurs at positions 582 and 583. The segment covering 592-604 (PEQKIEREKERRM) has biased composition (basic and acidic residues). The 54-residue stretch at 601-654 (ERRMANNARERLRVRDINEAFKELGRMCQLHLKSEKPQTKLLILHQAVAVILSL) folds into the bHLH domain. Glycyl lysine isopeptide (Lys-Gly) (interchain with G-Cter in SUMO2) cross-links involve residues Lys-633 and Lys-677. The tract at residues 656–679 (QQVRERNLNPKAACLKRREEEKVS) is class A specific domain. Positions 674-706 (EEEKVSAASAEPPNTLPGAHPGLSESTNPMGHL) are disordered. Residues 697–706 (SESTNPMGHL) show a composition bias toward polar residues.

Efficient DNA binding requires dimerization with another bHLH protein. Forms homo- or heterooligomers with myogenin, E12 and ITF2 proteins and RUNX1T1. Interacts with PTF1A. Interacts with NEUROD2. Interacts with BHLHA9. Widely expressed.

It is found in the nucleus. Its function is as follows. Transcriptional regulator. Involved in the initiation of neuronal differentiation. Activates transcription by binding to the E box (5'-CANNTG-3'). May be involved in the functional network that regulates the development of the GnRH axis. The sequence is that of Transcription factor 12 (Tcf12) from Mus musculus (Mouse).